Reading from the N-terminus, the 130-residue chain is Small ribosomal subunit protein uS11 (130 aa).

Belongs to the universal ribosomal protein uS11 family. Part of the 30S ribosomal subunit. Interacts with proteins S7 and S18. Binds to IF-3.

Located on the platform of the 30S subunit, it bridges several disparate RNA helices of the 16S rRNA. Forms part of the Shine-Dalgarno cleft in the 70S ribosome. In Parasynechococcus marenigrum (strain WH8102), this protein is Small ribosomal subunit protein uS11.